We begin with the raw amino-acid sequence, 619 residues long: Leucine aminopeptidase 2 (619 aa).

Residues 141-143 (QCQ) and 273-278 (PYGGME) contribute to the a peptide site. Zn(2+) is bound at residue His-302. Glu-303 functions as the Proton acceptor in the catalytic mechanism. Zn(2+) is bound by residues His-306 and Glu-325. Tyr-390 acts as the Proton donor in catalysis.

It belongs to the peptidase M1 family. It depends on Zn(2+) as a cofactor.

It is found in the cytoplasm. The protein localises to the nucleus. The enzyme catalyses an epoxide + H2O = an ethanediol. Its function is as follows. Aminopeptidase that preferentially cleaves di- and tripeptides. Also has low epoxide hydrolase activity (in vitro). Can hydrolyze the epoxide leukotriene LTA(4) but it forms preferentially 5,6-dihydroxy-7,9,11,14-eicosatetraenoic acid rather than the cytokine leukotriene B(4) as the product compared to the homologous mammalian enzyme (in vitro). In Coccidioides immitis (strain RS) (Valley fever fungus), this protein is Leucine aminopeptidase 2.